The chain runs to 215 residues: Ribonuclease S-6 (215 aa).

The signal sequence occupies residues 1–22 (MFNLPLTSVFVIFLFALSPIYG). Q32 is a binding site for RNA. A disulfide bridge links C38 with C43. An N-linked (GlcNAc...) asparagine glycan is attached at N49. H53 provides a ligand contact to RNA. H53 (proton donor) is an active-site residue. A glycan (N-linked (GlcNAc...) asparagine) is linked at N59. A disulfide bridge connects residues C67 and C116. Residues 91–92 (DL), R94, F105, 108–109 (RE), and 112–113 (KH) each bind RNA. Residue E109 is part of the active site. Catalysis depends on H113, which acts as the Proton acceptor. N-linked (GlcNAc...) asparagine glycans are attached at residues N160 and N172. 2 disulfides stabilise this stretch: C175/C204 and C187/C198.

The protein belongs to the RNase T2 family.

It is found in the secreted. Its subcellular location is the extracellular space. The catalysed reaction is a ribonucleotidyl-ribonucleotide-RNA + H2O = a 3'-end 3'-phospho-ribonucleotide-RNA + a 5'-end dephospho-ribonucleoside-RNA + H(+). In terms of biological role, self-incompatibility (SI) is the inherited ability of a flowering plant to prevent self-fertilization by discriminating between self and non-self pollen during pollination. In many species of the Solanaceae, self-incompatibility is controlled by the single, multiallelic locus S. This stylar glycoprotein is associated with expression of self-incompatibility in potato. This chain is Ribonuclease S-6, found in Nicotiana alata (Winged tobacco).